The sequence spans 338 residues: Anthranilate phosphoribosyltransferase (338 aa).

5-phospho-alpha-D-ribose 1-diphosphate contacts are provided by residues G82, 85 to 86, T90, 92 to 95, 110 to 118, and S122; these read GD, NIST, and KHGNRAASS. Anthranilate is bound at residue G82. S94 contributes to the Mg(2+) binding site. Residue N113 participates in anthranilate binding. R168 is an anthranilate binding site. D226 and E227 together coordinate Mg(2+).

It belongs to the anthranilate phosphoribosyltransferase family. In terms of assembly, homodimer. Mg(2+) serves as cofactor.

It catalyses the reaction N-(5-phospho-beta-D-ribosyl)anthranilate + diphosphate = 5-phospho-alpha-D-ribose 1-diphosphate + anthranilate. The protein operates within amino-acid biosynthesis; L-tryptophan biosynthesis; L-tryptophan from chorismate: step 2/5. Catalyzes the transfer of the phosphoribosyl group of 5-phosphorylribose-1-pyrophosphate (PRPP) to anthranilate to yield N-(5'-phosphoribosyl)-anthranilate (PRA). The polypeptide is Anthranilate phosphoribosyltransferase (Deinococcus radiodurans (strain ATCC 13939 / DSM 20539 / JCM 16871 / CCUG 27074 / LMG 4051 / NBRC 15346 / NCIMB 9279 / VKM B-1422 / R1)).